Consider the following 282-residue polypeptide: Probable septum site-determining protein MinC (282 aa).

The disordered stretch occupies residues 103 to 147 (SQSRRGGKDEAPKEKAGKPEATAASGQTDAEAAGNTGKGKDSEGA). The segment covering 104-120 (QSRRGGKDEAPKEKAGK) has biased composition (basic and acidic residues).

The protein belongs to the MinC family. In terms of assembly, interacts with MinD and FtsZ.

Its function is as follows. Cell division inhibitor that blocks the formation of polar Z ring septums. Rapidly oscillates between the poles of the cell to destabilize FtsZ filaments that have formed before they mature into polar Z rings. Prevents FtsZ polymerization. The chain is Probable septum site-determining protein MinC from Cupriavidus metallidurans (strain ATCC 43123 / DSM 2839 / NBRC 102507 / CH34) (Ralstonia metallidurans).